The following is a 172-amino-acid chain: uncharacterized protein (172 aa).

It belongs to the flavoredoxin family. The cofactor is FMN.

This is an uncharacterized protein from Pyrococcus horikoshii (strain ATCC 700860 / DSM 12428 / JCM 9974 / NBRC 100139 / OT-3).